Here is a 285-residue protein sequence, read N- to C-terminus: RING finger protein 223 (285 aa).

The segment at 81–132 (CSICFSGYDNIFKTPKELSCSHVFCLECLARLAAAQPAGRSGREAVPCPFCR) adopts an RING-type zinc-finger fold. A helical membrane pass occupies residues 230–250 (VALVSVLLLVLFCVILWPVQC).

The protein localises to the membrane. The protein is RING finger protein 223 (Rnf223) of Mus musculus (Mouse).